The following is a 319-amino-acid chain: Acetyl-coenzyme A carboxylase carboxyl transferase subunit alpha (319 aa).

Residues 43–296 (LKQKSVELTQ…KTQLLLDLVE (254 aa)) form the CoA carboxyltransferase C-terminal domain.

This sequence belongs to the AccA family. Acetyl-CoA carboxylase is a heterohexamer composed of biotin carboxyl carrier protein (AccB), biotin carboxylase (AccC) and two subunits each of ACCase subunit alpha (AccA) and ACCase subunit beta (AccD).

It localises to the cytoplasm. The enzyme catalyses N(6)-carboxybiotinyl-L-lysyl-[protein] + acetyl-CoA = N(6)-biotinyl-L-lysyl-[protein] + malonyl-CoA. The protein operates within lipid metabolism; malonyl-CoA biosynthesis; malonyl-CoA from acetyl-CoA: step 1/1. Functionally, component of the acetyl coenzyme A carboxylase (ACC) complex. First, biotin carboxylase catalyzes the carboxylation of biotin on its carrier protein (BCCP) and then the CO(2) group is transferred by the carboxyltransferase to acetyl-CoA to form malonyl-CoA. This Blochmanniella floridana protein is Acetyl-coenzyme A carboxylase carboxyl transferase subunit alpha.